Consider the following 185-residue polypeptide: Ribosome-recycling factor (185 aa).

It belongs to the RRF family.

The protein localises to the cytoplasm. Responsible for the release of ribosomes from messenger RNA at the termination of protein biosynthesis. May increase the efficiency of translation by recycling ribosomes from one round of translation to another. This chain is Ribosome-recycling factor, found in Chloroflexus aggregans (strain MD-66 / DSM 9485).